A 329-amino-acid polypeptide reads, in one-letter code: Methionyl-tRNA formyltransferase (329 aa).

112–115 (SILP) is a (6S)-5,6,7,8-tetrahydrofolate binding site.

It belongs to the Fmt family.

It carries out the reaction L-methionyl-tRNA(fMet) + (6R)-10-formyltetrahydrofolate = N-formyl-L-methionyl-tRNA(fMet) + (6S)-5,6,7,8-tetrahydrofolate + H(+). Attaches a formyl group to the free amino group of methionyl-tRNA(fMet). The formyl group appears to play a dual role in the initiator identity of N-formylmethionyl-tRNA by promoting its recognition by IF2 and preventing the misappropriation of this tRNA by the elongation apparatus. This chain is Methionyl-tRNA formyltransferase, found in Shewanella sediminis (strain HAW-EB3).